Reading from the N-terminus, the 580-residue chain is XK-related protein 7 (580 aa).

A compositionally biased stretch (low complexity) spans 1–22; sequence MAAKSDGAAAVAGPGPEGPAGA. Residues 1–28 are disordered; sequence MAAKSDGAAAVAGPGPEGPAGADRGGAG. 8 consecutive transmembrane segments (helical) span residues 59 to 79, 89 to 109, 260 to 280, 303 to 323, 326 to 346, 355 to 375, 384 to 404, and 415 to 435; these read WVLCALLVFFSDGATDLWLAA, YFGLTLLFVLLPSLVVQLLSF, LLTALSISASLVSLAWTLASY, VLWHLFTIAARTLAFALFASV, LYFGIFIVAHWCIMTFWVIQG, WEEIIYNMVVGIIYIFCWFNV, VTLYYCIVLLENAALTGFWYS, and LILVCVVASSFALGIFFMCVY. The tract at residues 470 to 516 is disordered; that stretch reads TSPPRSLPRTTGAERDGAAVGGERAGTPTPPVFQVRPGLPPTPVARP.

This sequence belongs to the XK family.

Its subcellular location is the cell membrane. The chain is XK-related protein 7 from Rattus norvegicus (Rat).